The following is a 250-amino-acid chain: Golgi SNAP receptor complex member 1 (250 aa).

The residue at position 2 (alanine 2) is an N-acetylalanine. Residues 2-229 (AAGTSNYWED…QRINLRKRRD (228 aa)) lie on the Cytoplasmic side of the membrane. Residues 10 to 30 (EDLRKQARQLENELDLKLVSF) adopt a coiled-coil conformation. The interval 39–59 (HSSARDGRRDRYSSDTTPLLN) is disordered. The span at 41–51 (SARDGRRDRYS) shows a compositional bias: basic and acidic residues. Residues 70 to 93 (MAIEIEQLLARLTGINDKMAEYTS) adopt a coiled-coil conformation. Residue serine 141 is modified to Phosphoserine. The helical; Anchor for type IV membrane protein transmembrane segment at 230-250 (SLILGGVIGVCTILLLLYAFH) threads the bilayer.

Belongs to the GOSR1 family. As to quaternary structure, component of several multiprotein Golgi SNARE complexes. Identified in a SNARE complex with BET1, STX5 and YKT6, in a SNARE complex with BET1L, STX5 and YKT6, in a SNARE complex with STX5, GOSR2, SEC22B and BET1, and in complex with STX5 and COG3. Interacts with GABARAPL2.

The protein resides in the golgi apparatus membrane. Its function is as follows. Involved in transport from the ER to the Golgi apparatus as well as in intra-Golgi transport. It belongs to a super-family of proteins called t-SNAREs or soluble NSF (N-ethylmaleimide-sensitive factor) attachment protein receptor. May play a protective role against hydrogen peroxide induced cytotoxicity under glutathione depleted conditions in neuronal cells by regulating the intracellular ROS levels via inhibition of p38 MAPK (MAPK11, MAPK12, MAPK13 and MAPK14). Participates in docking and fusion stage of ER to cis-Golgi transport. Plays an important physiological role in VLDL-transport vesicle-Golgi fusion and thus in VLDL delivery to the hepatic cis-Golgi. The sequence is that of Golgi SNAP receptor complex member 1 (GOSR1) from Bos taurus (Bovine).